A 78-amino-acid chain; its full sequence is Acyl carrier protein (78 aa).

The 77-residue stretch at 1–77 folds into the Carrier domain; that stretch reads MSEVEKKVID…DAIDYIEKNL (77 aa). An O-(pantetheine 4'-phosphoryl)serine modification is found at Ser-37.

This sequence belongs to the acyl carrier protein (ACP) family. In terms of processing, 4'-phosphopantetheine is transferred from CoA to a specific serine of apo-ACP by AcpS. This modification is essential for activity because fatty acids are bound in thioester linkage to the sulfhydryl of the prosthetic group.

The protein resides in the cytoplasm. The protein operates within lipid metabolism; fatty acid biosynthesis. In terms of biological role, carrier of the growing fatty acid chain in fatty acid biosynthesis. The protein is Acyl carrier protein of Porphyromonas gingivalis (strain ATCC 33277 / DSM 20709 / CIP 103683 / JCM 12257 / NCTC 11834 / 2561).